Reading from the N-terminus, the 207-residue chain is Venom allergen 5 (207 aa).

Intrachain disulfides connect Cys-4–Cys-16, Cys-8–Cys-105, Cys-29–Cys-97, and Cys-173–Cys-190. Residues 48-192 (VDEHNRFRQK…MKSHYLVCNY (145 aa)) form the SCP domain.

The protein belongs to the CRISP family. Venom allergen 5-like subfamily. As to quaternary structure, monomer. In terms of tissue distribution, expressed by the venom gland.

Its subcellular location is the secreted. In Polybia scutellaris rioplatensis (Camoati), this protein is Venom allergen 5.